The primary structure comprises 337 residues: UDP-3-O-acylglucosamine N-acyltransferase 1 (337 aa).

The active-site Proton acceptor is histidine 238.

It belongs to the transferase hexapeptide repeat family. LpxD subfamily. As to quaternary structure, homotrimer.

It carries out the reaction a UDP-3-O-[(3R)-3-hydroxyacyl]-alpha-D-glucosamine + a (3R)-hydroxyacyl-[ACP] = a UDP-2-N,3-O-bis[(3R)-3-hydroxyacyl]-alpha-D-glucosamine + holo-[ACP] + H(+). It participates in bacterial outer membrane biogenesis; LPS lipid A biosynthesis. Functionally, catalyzes the N-acylation of UDP-3-O-acylglucosamine using 3-hydroxyacyl-ACP as the acyl donor. Is involved in the biosynthesis of lipid A, a phosphorylated glycolipid that anchors the lipopolysaccharide to the outer membrane of the cell. The protein is UDP-3-O-acylglucosamine N-acyltransferase 1 of Koribacter versatilis (strain Ellin345).